The primary structure comprises 1449 residues: Spike glycoprotein (1449 aa).

An N-terminal signal peptide occupies residues 1–28 (MKKLFVVLVVMPLIYGDNFPCSKLTNRT). 2 S1 regions span residues 17–776 (DNFP…FYYY) and 29–776 (IGNH…FYYY). At 29-1390 (IGNHWNLIET…NRIETYVKWP (1362 aa)) the chain is on the virion surface side. The tract at residues 657-801 (VIYEEGDNIV…DSNDVDCEPV (145 aa)) is interaction with host ANPEP. The interval 777–1449 (SIYNYTNDRT…YEPIEKVHVH (673 aa)) is S2. Residues 1022 to 1043 (AGGITLGALGGGAVAIPFAVAV) are fusion peptide. The tract at residues 1037–1156 (IPFAVAVQAR…QVDRLITGRL (120 aa)) is heptad repeat 1 (HR1). Coiled coils occupy residues 1104 to 1148 (QDVV…DAQV) and 1338 to 1380 (TYLN…LEWL). Positions 1305-1402 (PDYIDINQTV…VWLLIGLVVI (98 aa)) are heptad repeat 2 (HR2). A helical membrane pass occupies residues 1391–1410 (WYVWLLIGLVVIFCIPLLLF). Residues 1411–1449 (CCCSTGCCGCIGCLGSCCHSICSRRQFENYEPIEKVHVH) are Intravirion-facing. A KxHxx motif is present at residues 1445 to 1449 (KVHVH).

The protein belongs to the alphacoronaviruses spike protein family. In terms of assembly, homotrimer. During virus morphogenesis, found in a complex with M and HE proteins. Interacts with host ANPEP.

The protein localises to the virion membrane. It localises to the host endoplasmic reticulum-Golgi intermediate compartment membrane. In terms of biological role, S1 region attaches the virion to the cell membrane by interacting with host ANPEP/aminopeptidase N, initiating the infection. Binding to the receptor probably induces conformational changes in the S glycoprotein unmasking the fusion peptide of S2 region and activating membranes fusion. S2 region belongs to the class I viral fusion protein. Under the current model, the protein has at least 3 conformational states: pre-fusion native state, pre-hairpin intermediate state, and post-fusion hairpin state. During viral and target cell membrane fusion, the coiled coil regions (heptad repeats) regions assume a trimer-of-hairpins structure, positioning the fusion peptide in close proximity to the C-terminal region of the ectodomain. The formation of this structure appears to drive apposition and subsequent fusion of viral and target cell membranes. This is Spike glycoprotein from Porcine transmissible gastroenteritis coronavirus (strain Miller) (TGEV).